We begin with the raw amino-acid sequence, 224 residues long: Cardosin-E (224 aa).

Residues 1 to 221 (DSGSAIVALT…DYGNLLVGFA (221 aa)) enclose the Peptidase A1 domain. Residue D35 is part of the active site. An intrachain disulfide couples C125 to C129. D134 is a catalytic residue.

This sequence belongs to the peptidase A1 family. Heterodimer of a light chain and a heavy chain. An intermediate form is produced first, and undergoes proteolytic processing to remove the internal plant-specific insert (PSI) and the propeptide. Post-translationally, N-glycosylated. In terms of tissue distribution, pistils.

Its subcellular location is the microsome membrane. The protein resides in the protein storage vacuole. It is found in the secreted. It localises to the cell wall. The protein localises to the extracellular space. Its subcellular location is the extracellular matrix. Inhibited by pepstatin. Functionally, aspartic protease with a high preference for bonds between hydrophobic residues. The protein is Cardosin-E of Cynara cardunculus (Cardoon).